A 129-amino-acid chain; its full sequence is uncharacterized protein (129 aa).

This is an uncharacterized protein from Invertebrate iridescent virus 6 (IIV-6).